The primary structure comprises 247 residues: Large ribosomal subunit protein uL30 (247 aa).

Position 1 is an N-acetylmethionine (Met-1). 4 repeat units span residues Lys-7 to Leu-17, Lys-18 to Ile-29, Lys-30 to Leu-41, and Arg-42 to Ala-53. The 4 X 12 AA tandem repeats stretch occupies residues Lys-7–Ala-53. A Phosphothreonine modification is found at Thr-16. Lys-123 bears the N6-acetyllysine mark. Residue Lys-126 is modified to N6-succinyllysine. Tyr-138 is modified (phosphotyrosine).

It belongs to the universal ribosomal protein uL30 family. In terms of assembly, component of the large ribosomal subunit. Homodimer. Interacts with DHX33.

Its subcellular location is the cytoplasm. Functionally, component of the large ribosomal subunit. The ribosome is a large ribonucleoprotein complex responsible for the synthesis of proteins in the cell. Binds to G-rich structures in 28S rRNA and in mRNAs. Plays a regulatory role in the translation apparatus; inhibits cell-free translation of mRNAs. The sequence is that of Large ribosomal subunit protein uL30 (RPL7) from Macaca fascicularis (Crab-eating macaque).